The chain runs to 162 residues: SsrA-binding protein (162 aa).

The tract at residues 140 to 162 (DKRETAAKRDWSRQKSRLMKDHG) is disordered.

The protein belongs to the SmpB family.

Its subcellular location is the cytoplasm. Its function is as follows. Required for rescue of stalled ribosomes mediated by trans-translation. Binds to transfer-messenger RNA (tmRNA), required for stable association of tmRNA with ribosomes. tmRNA and SmpB together mimic tRNA shape, replacing the anticodon stem-loop with SmpB. tmRNA is encoded by the ssrA gene; the 2 termini fold to resemble tRNA(Ala) and it encodes a 'tag peptide', a short internal open reading frame. During trans-translation Ala-aminoacylated tmRNA acts like a tRNA, entering the A-site of stalled ribosomes, displacing the stalled mRNA. The ribosome then switches to translate the ORF on the tmRNA; the nascent peptide is terminated with the 'tag peptide' encoded by the tmRNA and targeted for degradation. The ribosome is freed to recommence translation, which seems to be the essential function of trans-translation. The protein is SsrA-binding protein of Roseobacter denitrificans (strain ATCC 33942 / OCh 114) (Erythrobacter sp. (strain OCh 114)).